A 363-amino-acid chain; its full sequence is tRNA(Met) cytidine acetate ligase (363 aa).

ATP-binding positions include 7 to 20, Gly96, Asn152, and Arg175; that span reads IAEY…HKYL.

It belongs to the TmcAL family.

It localises to the cytoplasm. The catalysed reaction is cytidine(34) in elongator tRNA(Met) + acetate + ATP = N(4)-acetylcytidine(34) in elongator tRNA(Met) + AMP + diphosphate. In terms of biological role, catalyzes the formation of N(4)-acetylcytidine (ac(4)C) at the wobble position of elongator tRNA(Met), using acetate and ATP as substrates. First activates an acetate ion to form acetyladenylate (Ac-AMP) and then transfers the acetyl group to tRNA to form ac(4)C34. This chain is tRNA(Met) cytidine acetate ligase, found in Streptococcus suis (strain 98HAH33).